Reading from the N-terminus, the 291-residue chain is Methionine aminopeptidase (291 aa).

His118 serves as a coordination point for substrate. Residues Asp135, Asp146, and His209 each contribute to the a divalent metal cation site. His216 lines the substrate pocket. Glu241 and Glu273 together coordinate a divalent metal cation.

The protein belongs to the peptidase M24A family. Methionine aminopeptidase type 1 subfamily. As to quaternary structure, monomer. Co(2+) is required as a cofactor. The cofactor is Zn(2+). Mn(2+) serves as cofactor. Requires Fe(2+) as cofactor.

The enzyme catalyses Release of N-terminal amino acids, preferentially methionine, from peptides and arylamides.. Functionally, removes the N-terminal methionine from nascent proteins. The N-terminal methionine is often cleaved when the second residue in the primary sequence is small and uncharged (Met-Ala-, Cys, Gly, Pro, Ser, Thr, or Val). Requires deformylation of the N(alpha)-formylated initiator methionine before it can be hydrolyzed. The protein is Methionine aminopeptidase of Chlamydia muridarum (strain MoPn / Nigg).